Consider the following 195-residue polypeptide: Envelope glycoprotein L (195 aa).

The signal sequence occupies residues 1-25 (MKIYRVLVHLSFVLGMFTKTNTVLA). Residues 28-157 (KYDLVHGFMR…LIAPADISCY (130 aa)) form an interaction with gH region. One can recognise a gL alphaherpesvirus-type domain in the interval 28–195 (KYDLVHGFMR…TTSGSRRANA (168 aa)). 2 disulfide bridges follow: Cys49–Cys78 and Cys156–Cys178.

This sequence belongs to the herpesviridae glycoprotein L (gL) family. Alphaherpesvirinae gL subfamily. As to quaternary structure, interacts with glycoprotein H (gH); this interaction is necessary for the correct processing and cell surface expression of gH. The heterodimer gH/gL seems to interact with gB trimers during fusion.

It localises to the virion membrane. The protein resides in the host cell membrane. It is found in the host Golgi apparatus. Its subcellular location is the host trans-Golgi network. Its function is as follows. The heterodimer glycoprotein H-glycoprotein L is required for the fusion of viral and plasma membranes leading to virus entry into the host cell. Acts as a functional inhibitor of gH and maintains gH in an inhibited form. Upon binding to host integrins, gL dissociates from gH leading to activation of the viral fusion glycoproteins gB and gH. The sequence is that of Envelope glycoprotein L from Gallus gallus (Chicken).